Consider the following 189-residue polypeptide: MANYSTSEFKSGLKVMLDGDPCSIIENEFVKPGKGQAFSRVKLRNLRNGKVWERTFKSGDSLEGADVMDVSMQYIYSDGEFWHFMDQTSFEQKQADETAVRDAKQWLKEEDICEVTLYNGEPLSVSPPNFVELEIIETDPGLKGDTAGTGGKPATLSTGAVVRVPLFVQTGEIVKVDTRTGDYVGRIKQ.

The residue at position 34 (lysine 34) is an N6-(3,6-diaminohexanoyl)-5-hydroxylysine.

It belongs to the elongation factor P family. May be beta-lysylated on the epsilon-amino group of Lys-34 by the combined action of EpmA and EpmB, and then hydroxylated on the C5 position of the same residue by EpmC (if this protein is present). Lysylation is critical for the stimulatory effect of EF-P on peptide-bond formation. The lysylation moiety may extend toward the peptidyltransferase center and stabilize the terminal 3-CCA end of the tRNA. Hydroxylation of the C5 position on Lys-34 may allow additional potential stabilizing hydrogen-bond interactions with the P-tRNA.

The protein localises to the cytoplasm. It functions in the pathway protein biosynthesis; polypeptide chain elongation. Involved in peptide bond synthesis. Alleviates ribosome stalling that occurs when 3 or more consecutive Pro residues or the sequence PPG is present in a protein, possibly by augmenting the peptidyl transferase activity of the ribosome. Modification of Lys-34 is required for alleviation. The protein is Elongation factor P of Alcanivorax borkumensis (strain ATCC 700651 / DSM 11573 / NCIMB 13689 / SK2).